Reading from the N-terminus, the 351-residue chain is MQRALPGARQHLGAILSSASVVVKALCAAVLFLYLLSFAVDTGCLAVTPGYLFPPNFWIWTLATHGLMEQHVWDVAISLATVVVAGRLLEPLWGALELLIFFSVVNVSVGLLGAFAYLLTYMASFNLVYLFTVRIHGALGFLGGVLVALKQTMGDCVVLRVPQVRVSVVPMLLLGLLLLLRLATLLQSPALASYGFGLISSWVYLRFYQRHSRGRGDMADHFAFATFFPEILQPVVGLLANLVHGLLVKVKICQKTVKRYDVGAPSSITISLPGTDPQDAERRRQLALKALNERLKRVEDQSVWPSMDDDEEEAGAKVDSPMPSDKAPTLPGKGAVPESSLITFEAAPPTL.

At 1 to 19 (MQRALPGARQHLGAILSSA) the chain is on the cytoplasmic side. Residues 1-205 (MQRALPGARQ…FGLISSWVYL (205 aa)) form a mediates homooligomerization region. A helical transmembrane segment spans residues 20 to 40 (SVVVKALCAAVLFLYLLSFAV). Residues 41-97 (DTGCLAVTPGYLFPPNFWIWTLATHGLMEQHVWDVAISLATVVVAGRLLEPLWGALE) are Lumenal-facing. A helical membrane pass occupies residues 98-118 (LLIFFSVVNVSVGLLGAFAYL). At 119 to 126 (LTYMASFN) the chain is on the cytoplasmic side. The chain crosses the membrane as a helical span at residues 127–147 (LVYLFTVRIHGALGFLGGVLV). The Lumenal portion of the chain corresponds to 148 to 165 (ALKQTMGDCVVLRVPQVR). The helical transmembrane segment at 166–186 (VSVVPMLLLGLLLLLRLATLL) threads the bilayer. Residues 187 to 351 (QSPALASYGF…ITFEAAPPTL (165 aa)) are Cytoplasmic-facing. Positions 206 to 229 (RFYQRHSRGRGDMADHFAFATFFP) are mediates localization to the Golgi. The segment at 300–351 (DQSVWPSMDDDEEEAGAKVDSPMPSDKAPTLPGKGAVPESSLITFEAAPPTL) is disordered. Position 329 is a phosphothreonine (threonine 329).

Belongs to the TMEM115 family. In terms of assembly, homooligomer. Interacts with COPB1. May interact with LMAN1. Interacts with the COG complex; probably through COG3.

It localises to the golgi apparatus. It is found in the golgi stack membrane. In terms of biological role, may play a role in retrograde transport of proteins from the Golgi to the endoplasmic reticulum. May indirectly play a role in protein glycosylation in the Golgi. This is Transmembrane protein 115 from Bos taurus (Bovine).